The primary structure comprises 165 residues: Cathelicidin-7 (165 aa).

The N-terminal stretch at 1–29 is a signal peptide; the sequence is METQRASFSLGRSSLWLLLLGLVVPSASA. Residues 30-130 constitute a propeptide that is removed on maturation; the sequence is QDLSYREAVL…FDITCNNIQS (101 aa). 2 cysteine pairs are disulfide-bonded: Cys-86–Cys-97 and Cys-108–Cys-125. At Arg-164 the chain carries Arginine amide.

The protein belongs to the cathelicidin family. As to expression, expressed in bone marrow myeloid cells, spleen and testis.

Its subcellular location is the secreted. Functionally, exerts a potent antimicrobial activity. The sequence is that of Cathelicidin-7 (CATHL7) from Bos taurus (Bovine).